A 383-amino-acid polypeptide reads, in one-letter code: Protein dyf-4 (383 aa).

The N-terminal stretch at 1 to 16 (MKTIWLLLATCIHVFA) is a signal peptide. N-linked (GlcNAc...) asparagine glycosylation is present at Asn64.

As to quaternary structure, interacts with daf-6. As to expression, expressed in sheath and socket glial cells in both the amphid and phasmid ciliated sensory neurons (at protein level).

It is found in the secreted. Required for the localization of daf-6 to the socket glial channel and the sheath lumen. In association with daf-6, plays a role in dendrite extension and ciliogenesis to ensure the formation of glial channels in amphid and phasmid ciliated sensory neurons. This Caenorhabditis elegans protein is Protein dyf-4.